A 182-amino-acid chain; its full sequence is MLEKYKNSKKLSRDLPQINDRIKFPKVRVIDDEGEQLGIFAPEAAIQLATKQGLDLVLVSDKSDPPVCRILDYGKYKFTQEKRAREAKKKQHNSSIKEVKMRYKIEEHDYKVRINQASKFLQSGDKVKATITFRGREIQHSNLAINLLNKMAADLVTIAEIQQAPSRDGRNVIMLLSPKKVN.

Belongs to the IF-3 family. As to quaternary structure, monomer.

Its subcellular location is the plastid. It localises to the chloroplast. In terms of biological role, IF-3 binds to the 30S ribosomal subunit and shifts the equilibrium between 70S ribosomes and their 50S and 30S subunits in favor of the free subunits, thus enhancing the availability of 30S subunits on which protein synthesis initiation begins. The chain is Translation initiation factor IF-3, chloroplastic from Porphyra purpurea (Red seaweed).